Reading from the N-terminus, the 248-residue chain is Transcription termination/antitermination protein NusG (248 aa).

The KOW domain maps to 197–227; sequence KGDQVRVIEGPFMNFTGTVEEVHPEKRKLTV.

Belongs to the NusG family. Monomer. Homodimer.

In terms of biological role, participates in transcription elongation, termination and antitermination. The sequence is that of Transcription termination/antitermination protein NusG from Aquifex aeolicus (strain VF5).